The primary structure comprises 263 residues: UPF0739 protein C1orf74 homolog (263 aa).

It belongs to the UPF0739 family.

This is UPF0739 protein C1orf74 homolog from Bos taurus (Bovine).